Reading from the N-terminus, the 543-residue chain is Secreted effector protein SptP (543 aa).

The tract at residues 35–139 (TDKAYVAPEK…FINLIKNKDN (105 aa)) is chaperone-binding. A Bacterial Rho-GAP domain is found at 162–293 (DVGAESKQPL…TAELEKIKAG (132 aa)). The region spanning 315-543 (IPINQQTQVK…QAQLLMTTAS (229 aa)) is the Tyrosine-protein phosphatase domain. Cysteine 481 acts as the Phosphocysteine intermediate in catalysis.

In terms of assembly, forms a complex with SicP.

The protein localises to the secreted. It is found in the host cytoplasm. It catalyses the reaction O-phospho-L-tyrosyl-[protein] + H2O = L-tyrosyl-[protein] + phosphate. Effector proteins function to alter host cell physiology and promote bacterial survival in host tissues. This protein includes tyrosine phosphatase and GTPase activating protein (GAP) activities. After bacterial internalization, GAP mediates the reversal of the cytoskeletal changes induced by SopE. This function is independent of its tyrosine phosphatase activity, which remains unclear. This Salmonella typhi protein is Secreted effector protein SptP (sptP).